The following is a 132-amino-acid chain: NADH-quinone oxidoreductase subunit I 1 (132 aa).

2 4Fe-4S ferredoxin-type domains span residues 42–71 (LKVS…VEAG) and 81–110 (ERYE…MTGQ). 8 residues coordinate [4Fe-4S] cluster: Cys-51, Cys-54, Cys-57, Cys-61, Cys-90, Cys-93, Cys-96, and Cys-100.

This sequence belongs to the complex I 23 kDa subunit family. As to quaternary structure, NDH-1 is composed of 14 different subunits. Subunits NuoA, H, J, K, L, M, N constitute the membrane sector of the complex. The cofactor is [4Fe-4S] cluster.

The protein resides in the cell inner membrane. It carries out the reaction a quinone + NADH + 5 H(+)(in) = a quinol + NAD(+) + 4 H(+)(out). Functionally, NDH-1 shuttles electrons from NADH, via FMN and iron-sulfur (Fe-S) centers, to quinones in the respiratory chain. The immediate electron acceptor for the enzyme in this species is believed to be ubiquinone. Couples the redox reaction to proton translocation (for every two electrons transferred, four hydrogen ions are translocated across the cytoplasmic membrane), and thus conserves the redox energy in a proton gradient. The protein is NADH-quinone oxidoreductase subunit I 1 of Geobacter sulfurreducens (strain ATCC 51573 / DSM 12127 / PCA).